Reading from the N-terminus, the 276-residue chain is Large ribosomal subunit protein uL2 (276 aa).

The tract at residues 224 to 276 (AMNPIDHPHGGGEGKTSGGRNPVTPWGVPTKGKKTRKRNKSSNKYIKRVSDKG) is disordered. The segment covering 254-270 (KGKKTRKRNKSSNKYIK) has biased composition (basic residues).

Belongs to the universal ribosomal protein uL2 family. As to quaternary structure, part of the 50S ribosomal subunit. Forms a bridge to the 30S subunit in the 70S ribosome.

Its function is as follows. One of the primary rRNA binding proteins. Required for association of the 30S and 50S subunits to form the 70S ribosome, for tRNA binding and peptide bond formation. It has been suggested to have peptidyltransferase activity; this is somewhat controversial. Makes several contacts with the 16S rRNA in the 70S ribosome. This is Large ribosomal subunit protein uL2 from Ehrlichia canis (strain Jake).